The following is a 612-amino-acid chain: Dihydroxy-acid dehydratase (612 aa).

Asp81 provides a ligand contact to Mg(2+). Cys122 is a binding site for [2Fe-2S] cluster. Mg(2+)-binding residues include Asp123 and Lys124. An N6-carboxylysine modification is found at Lys124. [2Fe-2S] cluster is bound at residue Cys195. Residue Glu491 coordinates Mg(2+). Catalysis depends on Ser517, which acts as the Proton acceptor.

It belongs to the IlvD/Edd family. As to quaternary structure, homodimer. The cofactor is [2Fe-2S] cluster. Requires Mg(2+) as cofactor.

It catalyses the reaction (2R)-2,3-dihydroxy-3-methylbutanoate = 3-methyl-2-oxobutanoate + H2O. The enzyme catalyses (2R,3R)-2,3-dihydroxy-3-methylpentanoate = (S)-3-methyl-2-oxopentanoate + H2O. Its pathway is amino-acid biosynthesis; L-isoleucine biosynthesis; L-isoleucine from 2-oxobutanoate: step 3/4. The protein operates within amino-acid biosynthesis; L-valine biosynthesis; L-valine from pyruvate: step 3/4. Its function is as follows. Functions in the biosynthesis of branched-chain amino acids. Catalyzes the dehydration of (2R,3R)-2,3-dihydroxy-3-methylpentanoate (2,3-dihydroxy-3-methylvalerate) into 2-oxo-3-methylpentanoate (2-oxo-3-methylvalerate) and of (2R)-2,3-dihydroxy-3-methylbutanoate (2,3-dihydroxyisovalerate) into 2-oxo-3-methylbutanoate (2-oxoisovalerate), the penultimate precursor to L-isoleucine and L-valine, respectively. This is Dihydroxy-acid dehydratase from Bartonella henselae (strain ATCC 49882 / DSM 28221 / CCUG 30454 / Houston 1) (Rochalimaea henselae).